Consider the following 234-residue polypeptide: 2-C-methyl-D-erythritol 4-phosphate cytidylyltransferase (234 aa).

This sequence belongs to the IspD/TarI cytidylyltransferase family. IspD subfamily.

It carries out the reaction 2-C-methyl-D-erythritol 4-phosphate + CTP + H(+) = 4-CDP-2-C-methyl-D-erythritol + diphosphate. Its pathway is isoprenoid biosynthesis; isopentenyl diphosphate biosynthesis via DXP pathway; isopentenyl diphosphate from 1-deoxy-D-xylulose 5-phosphate: step 2/6. Functionally, catalyzes the formation of 4-diphosphocytidyl-2-C-methyl-D-erythritol from CTP and 2-C-methyl-D-erythritol 4-phosphate (MEP). The protein is 2-C-methyl-D-erythritol 4-phosphate cytidylyltransferase of Photobacterium profundum (strain SS9).